The following is a 527-amino-acid chain: GMP synthase [glutamine-hydrolyzing] (527 aa).

In terms of domain architecture, Glutamine amidotransferase type-1 spans 19-212 (KIIVLDYGSQ…AFSICGAKGD (194 aa)). Residue C96 is the Nucleophile of the active site. Catalysis depends on residues H186 and E188. A GMPS ATP-PPase domain is found at 213–402 (WSMANFVDMQ…LGMPDEVVWR (190 aa)). 240 to 246 (SGGVDSS) contacts ATP.

As to quaternary structure, homodimer.

It catalyses the reaction XMP + L-glutamine + ATP + H2O = GMP + L-glutamate + AMP + diphosphate + 2 H(+). It participates in purine metabolism; GMP biosynthesis; GMP from XMP (L-Gln route): step 1/1. Catalyzes the synthesis of GMP from XMP. The protein is GMP synthase [glutamine-hydrolyzing] of Streptococcus thermophilus (strain ATCC BAA-250 / LMG 18311).